The primary structure comprises 531 residues: Aspartate--tRNA ligase, cytoplasmic (531 aa).

A disordered region spans residues 1 to 45 (MADAAEGEQPKLSKKELNKLARKAKKDEKAGEKGGNQQQAAAMDQ). Basic and acidic residues predominate over residues 8–32 (EQPKLSKKELNKLARKAKKDEKAGE). E259 lines the L-aspartate pocket. The aspartate stretch occupies residues 281–284 (QLYK). L-aspartate is bound at residue R303. Residues 303–305 (RAE), 311–313 (RHM), and E454 each bind ATP. Residues S457 and R461 each coordinate L-aspartate. Residue 502–505 (GLER) coordinates ATP.

It belongs to the class-II aminoacyl-tRNA synthetase family. Type 2 subfamily. In terms of assembly, homodimer.

It localises to the cytoplasm. It catalyses the reaction tRNA(Asp) + L-aspartate + ATP = L-aspartyl-tRNA(Asp) + AMP + diphosphate. The sequence is that of Aspartate--tRNA ligase, cytoplasmic from Caenorhabditis elegans.